The sequence spans 424 residues: Imidazolonepropionase (424 aa).

Residues histidine 81 and histidine 83 each coordinate Fe(3+). Zn(2+) contacts are provided by histidine 81 and histidine 83. The 4-imidazolone-5-propanoate site is built by arginine 90, tyrosine 153, and histidine 186. Tyrosine 153 is an N-formimidoyl-L-glutamate binding site. A Fe(3+)-binding site is contributed by histidine 251. Histidine 251 lines the Zn(2+) pocket. Glutamate 254 is a binding site for 4-imidazolone-5-propanoate. Aspartate 325 contacts Fe(3+). Aspartate 325 lines the Zn(2+) pocket. N-formimidoyl-L-glutamate-binding residues include asparagine 327 and glycine 329. Threonine 330 lines the 4-imidazolone-5-propanoate pocket.

It belongs to the metallo-dependent hydrolases superfamily. HutI family. It depends on Zn(2+) as a cofactor. The cofactor is Fe(3+).

It localises to the cytoplasm. The catalysed reaction is 4-imidazolone-5-propanoate + H2O = N-formimidoyl-L-glutamate. Its pathway is amino-acid degradation; L-histidine degradation into L-glutamate; N-formimidoyl-L-glutamate from L-histidine: step 3/3. Functionally, catalyzes the hydrolytic cleavage of the carbon-nitrogen bond in imidazolone-5-propanoate to yield N-formimidoyl-L-glutamate. It is the third step in the universal histidine degradation pathway. This Syntrophobacter fumaroxidans (strain DSM 10017 / MPOB) protein is Imidazolonepropionase.